A 776-amino-acid polypeptide reads, in one-letter code: Structure-specific endonuclease subunit SLX4 (776 aa).

The span at 201–217 (EEQMVSDDNSSTEDDTD) shows a compositional bias: acidic residues. Disordered regions lie at residues 201-223 (EEQM…QNDG), 263-283 (KSLQ…PDQN), and 507-531 (PPLD…KPHS).

The protein belongs to the SLX4 family. Forms a heterodimer with SLX1. Post-translationally, phosphorylated in response to DNA damage.

It is found in the nucleus. Functionally, regulatory subunit of the SLX1-SLX4 structure-specific endonuclease that resolves DNA secondary structures generated during DNA repair and recombination. Has endonuclease activity towards branched DNA substrates, introducing single-strand cuts in duplex DNA close to junctions with ss-DNA. This Candida albicans (strain SC5314 / ATCC MYA-2876) (Yeast) protein is Structure-specific endonuclease subunit SLX4.